The chain runs to 161 residues: Phage-like element PBSX protein XkdI (161 aa).

The protein to B.subtilis YqbI.

This Bacillus subtilis (strain 168) protein is Phage-like element PBSX protein XkdI (xkdI).